The sequence spans 170 residues: Transmembrane protein 217B (170 aa).

A signal peptide spans 1–21 (MNVRMFSLMVGIFSVLNTTQF). Residues 22–58 (FIFDLNQKTHICYEAKFSIYVDSKSELVTWTLFHRAN) lie on the Lumenal side of the membrane. Residues 59 to 79 (ISTGLSLTTIIIGCFLFYCIH) traverse the membrane as a helical segment. Topologically, residues 80-85 (KNIYMG) are cytoplasmic. A helical transmembrane segment spans residues 86 to 106 (LLIYAMWIITYELINFSIVLL). The Lumenal portion of the chain corresponds to 107–120 (LNGIIKDHFKTLSY). A helical membrane pass occupies residues 121 to 141 (LHWIFQISHMLLHFFCLPFIV). Residues 142 to 170 (KHAYNLYKESQTVGRKRRHRLCSTIAVNS) lie on the Cytoplasmic side of the membrane.

It localises to the membrane. The chain is Transmembrane protein 217B from Homo sapiens (Human).